The following is a 111-amino-acid chain: Large ribosomal subunit protein uL22 (111 aa).

The protein belongs to the universal ribosomal protein uL22 family. Part of the 50S ribosomal subunit.

Its function is as follows. This protein binds specifically to 23S rRNA; its binding is stimulated by other ribosomal proteins, e.g. L4, L17, and L20. It is important during the early stages of 50S assembly. It makes multiple contacts with different domains of the 23S rRNA in the assembled 50S subunit and ribosome. Functionally, the globular domain of the protein is located near the polypeptide exit tunnel on the outside of the subunit, while an extended beta-hairpin is found that lines the wall of the exit tunnel in the center of the 70S ribosome. This is Large ribosomal subunit protein uL22 from Mycoplasma mycoides subsp. mycoides SC (strain CCUG 32753 / NCTC 10114 / PG1).